We begin with the raw amino-acid sequence, 198 residues long: HTH-type transcriptional repressor DhaR (198 aa).

The region spanning 4–64 (TPVRQHLVEK…QVLQEFFSDL (61 aa)) is the HTH tetR-type domain.

Transcriptional repressor for the dhaA haloalkane dehalogenase gene. This Mycobacterium sp. (strain GP1) protein is HTH-type transcriptional repressor DhaR (dhaR).